The primary structure comprises 382 residues: Lipid-A-disaccharide synthase (382 aa).

This sequence belongs to the LpxB family.

The enzyme catalyses 2-N,3-O-bis[(3R)-3-hydroxytetradecanoyl]-alpha-D-glucosaminyl 1-phosphate + UDP-2-N,3-O-bis[(3R)-3-hydroxytetradecanoyl]-alpha-D-glucosamine = lipid A disaccharide (E. coli) + UDP + H(+). The catalysed reaction is a lipid X + a UDP-2-N,3-O-bis[(3R)-3-hydroxyacyl]-alpha-D-glucosamine = a lipid A disaccharide + UDP + H(+). It participates in glycolipid biosynthesis; lipid IV(A) biosynthesis; lipid IV(A) from (3R)-3-hydroxytetradecanoyl-[acyl-carrier-protein] and UDP-N-acetyl-alpha-D-glucosamine: step 5/6. In terms of biological role, condensation of UDP-2,3-diacylglucosamine and 2,3-diacylglucosamine-1-phosphate to form lipid A disaccharide, a precursor of lipid A, a phosphorylated glycolipid that anchors the lipopolysaccharide to the outer membrane of the cell. The polypeptide is Lipid-A-disaccharide synthase (Shigella flexneri serotype 5b (strain 8401)).